The primary structure comprises 160 residues: MTDAEQTIKNQKTQEAEQSLRVFLRSENATLPTRGSVLSAGYDIYASEEAVIPAQGQGLVGTDISVAVPIGTYGRVAPRSGLAVKHGISTGAGVIDADYRGEVKVVLFNHAQKDFTIQKGDRIAQLVLEKIVMADIKQITAEELDITARGEGGFGSTGKN.

Residues serine 80, glycine 93, aspartate 96, tyrosine 99, lysine 104, arginine 149, phenylalanine 154, and glycine 155 each contribute to the dUMP site.

It belongs to the dUTPase family. Homotrimer. Mg(2+) serves as cofactor.

It catalyses the reaction dUTP + H2O = dUMP + diphosphate + H(+). It functions in the pathway pyrimidine metabolism; dUMP biosynthesis; dUMP from dCTP (dUTP route): step 2/2. Involved in nucleotide metabolism via production of dUMP, the immediate precursor of thymidine nucleotides, and decreases the intracellular concentration of dUTP so that uracil cannot be incorporated into DNA. The polypeptide is Deoxyuridine 5'-triphosphate nucleotidohydrolase (DUT1) (Debaryomyces hansenii (strain ATCC 36239 / CBS 767 / BCRC 21394 / JCM 1990 / NBRC 0083 / IGC 2968) (Yeast)).